We begin with the raw amino-acid sequence, 1093 residues long: Phosphorylase b kinase regulatory subunit beta (1093 aa).

Ala2 carries the post-translational modification N-acetylalanine. Phosphoserine is present on Ala4. A calmodulin-binding region spans residues 7–29 (LTAEVSWKVLERRARTKRSGSVY). Ser12 carries the phosphoserine; by autocatalysis modification. A phosphoserine mark is found at Ser27 and Ser701. The tract at residues 689-716 (EPPKHSKVKRQSSTPSAPELGQQPDVNI) is disordered. 2 calmodulin-binding regions span residues 768–795 (RVYRRAGSQKLWLAVRYGAAFTQKFSSS) and 920–951 (NGRCWLNRRQIDGSLNRTPTGFYDRVWQILER). A lipid anchor (S-farnesyl cysteine) is attached at Cys1090.

This sequence belongs to the phosphorylase b kinase regulatory chain family. As to quaternary structure, hexadecamer of 4 heterotetramers, each composed of alpha, beta, gamma, and delta subunits. Alpha (PHKA1 or PHKA2) and beta (PHKB) are regulatory subunits, gamma (PHKG1 or PHKG2) is the catalytic subunit, and delta is calmodulin. In terms of processing, ser-701 is probably phosphorylated by PKA. Although the final Cys may be farnesylated, the terminal tripeptide is probably not removed, and the C-terminus is not methylated.

It is found in the cell membrane. Its pathway is glycan biosynthesis; glycogen metabolism. With respect to regulation, by phosphorylation of various serine residues. Phosphorylase b kinase catalyzes the phosphorylation of serine in certain substrates, including troponin I. The beta chain acts as a regulatory unit and modulates the activity of the holoenzyme in response to phosphorylation. The polypeptide is Phosphorylase b kinase regulatory subunit beta (PHKB) (Homo sapiens (Human)).